The following is a 414-amino-acid chain: Serine--tRNA ligase (414 aa).

230–232 (TAE) lines the L-serine pocket. 261-263 (RKE) provides a ligand contact to ATP. Glu284 provides a ligand contact to L-serine. Position 348–351 (348–351 (EISS)) interacts with ATP. Residue Ser382 participates in L-serine binding.

The protein belongs to the class-II aminoacyl-tRNA synthetase family. Type-1 seryl-tRNA synthetase subfamily. As to quaternary structure, homodimer. The tRNA molecule binds across the dimer.

It localises to the cytoplasm. The catalysed reaction is tRNA(Ser) + L-serine + ATP = L-seryl-tRNA(Ser) + AMP + diphosphate + H(+). It carries out the reaction tRNA(Sec) + L-serine + ATP = L-seryl-tRNA(Sec) + AMP + diphosphate + H(+). It functions in the pathway aminoacyl-tRNA biosynthesis; selenocysteinyl-tRNA(Sec) biosynthesis; L-seryl-tRNA(Sec) from L-serine and tRNA(Sec): step 1/1. Functionally, catalyzes the attachment of serine to tRNA(Ser). Is also able to aminoacylate tRNA(Sec) with serine, to form the misacylated tRNA L-seryl-tRNA(Sec), which will be further converted into selenocysteinyl-tRNA(Sec). This is Serine--tRNA ligase from Nitratiruptor sp. (strain SB155-2).